We begin with the raw amino-acid sequence, 444 residues long: Cop9 signalosome complex subunit 11 (444 aa).

The region spanning 195–367 (FFTMMTSEPL…IHFEDSSILQ (173 aa)) is the PCI domain. Positions 419 to 439 (SSDDMDIDEVNDRSDISDSEG) are disordered.

As to quaternary structure, component of a COP9 signalosome-like (CSN) complex, composed of RRI1/CSN5, CSN9, RRI2/CSN10, PCI8/CSN11, CSN12 and CSI1. Interacts with PRT1 and RPG1, 2 subunits of the core complex of translation initiation factor 3 (eIF3).

The protein resides in the cytoplasm. It is found in the nucleus. In terms of biological role, component of the COP9 signalosome (CSN) complex that acts as an regulator of the ubiquitin (Ubl) conjugation pathway by mediating the deneddylation of the cullin subunit of SCF-type E3 ubiquitin-protein ligase complexes The CSN complex is involved in the regulation of the mating pheromone response. PCI8 may also be involved in transcriptional and translational control. The polypeptide is Cop9 signalosome complex subunit 11 (PCI8) (Saccharomyces cerevisiae (strain ATCC 204508 / S288c) (Baker's yeast)).